The primary structure comprises 97 residues: Co-chaperonin GroES (97 aa).

The protein belongs to the GroES chaperonin family. In terms of assembly, heptamer of 7 subunits arranged in a ring. Interacts with the chaperonin GroEL.

The protein resides in the cytoplasm. Together with the chaperonin GroEL, plays an essential role in assisting protein folding. The GroEL-GroES system forms a nano-cage that allows encapsulation of the non-native substrate proteins and provides a physical environment optimized to promote and accelerate protein folding. GroES binds to the apical surface of the GroEL ring, thereby capping the opening of the GroEL channel. This Yersinia pseudotuberculosis serotype O:1b (strain IP 31758) protein is Co-chaperonin GroES.